The chain runs to 142 residues: Large ribosomal subunit protein uL13 (142 aa).

The protein belongs to the universal ribosomal protein uL13 family. In terms of assembly, part of the 50S ribosomal subunit.

In terms of biological role, this protein is one of the early assembly proteins of the 50S ribosomal subunit, although it is not seen to bind rRNA by itself. It is important during the early stages of 50S assembly. In Saccharophagus degradans (strain 2-40 / ATCC 43961 / DSM 17024), this protein is Large ribosomal subunit protein uL13.